The primary structure comprises 723 residues: UPF0313 protein YgiQ (723 aa).

The region spanning 372-650 (AYEMIRFSIN…KALLRYHDPA (279 aa)) is the Radical SAM core domain. The [4Fe-4S] cluster site is built by Cys-386, Cys-390, and Cys-393. The disordered stretch occupies residues 686 to 723 (EARRQNRNTRPALTKHTPVEHQRQGLAANKKRGKGAGR). Positions 714–723 (NKKRGKGAGR) are enriched in basic residues.

It belongs to the UPF0313 family. It depends on [4Fe-4S] cluster as a cofactor.

The sequence is that of UPF0313 protein YgiQ from Salmonella typhimurium (strain LT2 / SGSC1412 / ATCC 700720).